Reading from the N-terminus, the 140-residue chain is Nucleoside diphosphate kinase (140 aa).

K11, F59, R87, T93, R104, and N114 together coordinate ATP. H117 functions as the Pros-phosphohistidine intermediate in the catalytic mechanism.

This sequence belongs to the NDK family. Homotetramer. Mg(2+) serves as cofactor.

It is found in the cytoplasm. It carries out the reaction a 2'-deoxyribonucleoside 5'-diphosphate + ATP = a 2'-deoxyribonucleoside 5'-triphosphate + ADP. The catalysed reaction is a ribonucleoside 5'-diphosphate + ATP = a ribonucleoside 5'-triphosphate + ADP. Its function is as follows. Major role in the synthesis of nucleoside triphosphates other than ATP. The ATP gamma phosphate is transferred to the NDP beta phosphate via a ping-pong mechanism, using a phosphorylated active-site intermediate. The chain is Nucleoside diphosphate kinase from Dinoroseobacter shibae (strain DSM 16493 / NCIMB 14021 / DFL 12).